The primary structure comprises 832 residues: MPLSYQHFRKLLLLDDEAGPLEEELPRLADEGLNRRVAEDLNLQLPNVSIPWTHKVGNFTGLYSSTLPVFNPNWQTPSFPDIHLHQDIINKCEQFVGPLTVNEKRRLKLSMPARFYPNSTKYLPLEKGIKPYYPDNVVNHYFQTRHYLHTLWQAGILYKRETTRSASFCGSPYSWEQELQHGAESFHQQSAGIFSRAPVGSSIQSKHQQSRLGLQPQKGLLARGNEGRSWSVRSRVHPTTWRSFGVEPSSSGHTNNFASKSASCLHQSAVRKAAYPTFSTTKRHSSSGHAVELHNISSSSAGSQSKGPVFSCWWLQFRNIEPCSEYCLSHLVSLLDDWGPCTEHGEHHIRIPRTPARVTGGVFLVDKNPHNTAESRLVVDFSQFSRGSTRVPWPKFAVPNLQSLTNLLSSNLSWLSLDVSAAFYHLPLHPAAMPHLLVGSSGLSRYVARLSSNSRILDHQHGTMQNLHDSCSRNLFDSLMLLYKTFGRKLHLYSHPIIMGFRKIPMGVGLSPFLLAQFTSAICSVVRRAFPHCLAFSYMDDVVLGAKSVQHLESLYTAVTNFLLSLGIHLNPNKTKRWGYSLHFMGYVIGSWGTLPQEHIVQKIKNCFRKLPVNRPIDWKVCQRIVGLLGFAAPFTQCGYPALMPLYACIQAKQAFTFSPTYKAFLSQQYSTLYPVARQRSGLCQVFADATPTGWGLVMGHQRMRGTFVAPLPIHTAELLAACFARSRSGAKLIGTDNSVVLSRKYTSFPWLLGCAANWILRGTSFVYVPSALNPADDPSRGRLGLYRPLIRLLFQPTTGRTSLYAVSPSVPSHLPVRVHFASPLHVAWRPP.

Residues 1–177 are terminal protein domain (TP); the sequence is MPLSYQHFRK…FCGSPYSWEQ (177 aa). Residues 178 to 335 form a spacer region; sequence ELQHGAESFH…YCLSHLVSLL (158 aa). A polymerase/reverse transcriptase domain (RT) region spans residues 336–679; the sequence is DDWGPCTEHG…YSTLYPVARQ (344 aa). The Reverse transcriptase domain maps to 346–589; the sequence is EHHIRIPRTP…YSLHFMGYVI (244 aa). Residues D418, D540, and D541 each coordinate Mg(2+).

The protein belongs to the hepadnaviridae P protein family.

The catalysed reaction is DNA(n) + a 2'-deoxyribonucleoside 5'-triphosphate = DNA(n+1) + diphosphate. It carries out the reaction Endonucleolytic cleavage to 5'-phosphomonoester.. Activated by host HSP70 and HSP40 in vitro to be able to bind the epsilon loop of the pgRNA. Because deletion of the RNase H region renders the protein partly chaperone-independent, the chaperones may be needed indirectly to relieve occlusion of the RNA-binding site by this domain. Inhibited by several reverse-transcriptase inhibitors: Lamivudine, Adefovir and Entecavir. Functionally, multifunctional enzyme that converts the viral RNA genome into dsDNA in viral cytoplasmic capsids. This enzyme displays a DNA polymerase activity that can copy either DNA or RNA templates, and a ribonuclease H (RNase H) activity that cleaves the RNA strand of RNA-DNA heteroduplexes in a partially processive 3'- to 5'-endonucleasic mode. Neo-synthesized pregenomic RNA (pgRNA) are encapsidated together with the P protein, and reverse-transcribed inside the nucleocapsid. Initiation of reverse-transcription occurs first by binding the epsilon loop on the pgRNA genome, and is initiated by protein priming, thereby the 5'-end of (-)DNA is covalently linked to P protein. Partial (+)DNA is synthesized from the (-)DNA template and generates the relaxed circular DNA (RC-DNA) genome. After budding and infection, the RC-DNA migrates in the nucleus, and is converted into a plasmid-like covalently closed circular DNA (cccDNA). The activity of P protein does not seem to be necessary for cccDNA generation, and is presumably released from (+)DNA by host nuclear DNA repair machinery. This chain is Protein P, found in Pan troglodytes (Chimpanzee).